The chain runs to 424 residues: Tyrosine--tRNA ligase (424 aa).

Residue Tyr37 participates in L-tyrosine binding. Positions 42–51 (PTADSLHLGH) match the 'HIGH' region motif. At Lys144 the chain carries N6-acetyllysine. L-tyrosine contacts are provided by Tyr175 and Gln179. Residues 235–239 (KFGKT) carry the 'KMSKS' region motif. Lys238 is an ATP binding site. One can recognise an S4 RNA-binding domain in the interval 357-414 (ADLMQALVDSELQPSRGQARKTIASNAITINGEKQSDPEYFFKEEDRLFGRFTLLRRG).

Belongs to the class-I aminoacyl-tRNA synthetase family. TyrS type 1 subfamily. In terms of assembly, homodimer.

Its subcellular location is the cytoplasm. The catalysed reaction is tRNA(Tyr) + L-tyrosine + ATP = L-tyrosyl-tRNA(Tyr) + AMP + diphosphate + H(+). In terms of biological role, catalyzes the attachment of tyrosine to tRNA(Tyr) in a two-step reaction: tyrosine is first activated by ATP to form Tyr-AMP and then transferred to the acceptor end of tRNA(Tyr). This chain is Tyrosine--tRNA ligase, found in Escherichia coli O127:H6 (strain E2348/69 / EPEC).